Here is a 147-residue protein sequence, read N- to C-terminus: Large ribosomal subunit protein uL15 (147 aa).

The interval 1-42 is disordered; that stretch reads MTIKLHHLRPAPGSKSNKIRVGRGEGGKRGKTAGRGTKGTKA.

Belongs to the universal ribosomal protein uL15 family. Part of the 50S ribosomal subunit.

Binds to the 23S rRNA. This chain is Large ribosomal subunit protein uL15, found in Rhodococcus erythropolis (strain PR4 / NBRC 100887).